The primary structure comprises 143 residues: UPF0763 protein HH_0976 (143 aa).

Belongs to the UPF0763 family.

The protein is UPF0763 protein HH_0976 of Helicobacter hepaticus (strain ATCC 51449 / 3B1).